Here is a 200-residue protein sequence, read N- to C-terminus: Small ribosomal subunit protein eS8B (200 aa).

Positions 1-41 are disordered; it reads MGITRDSRHKRSATGAKRAQYRKKRKFELGRQPSNTRIGPK. Serine 62 and serine 99 each carry phosphoserine. Positions 124 to 145 are disordered; it reads KGKKATATPTPKSKHVQRKHSA. The segment covering 135-145 has biased composition (basic residues); the sequence is KSKHVQRKHSA. A phosphoserine mark is found at serine 150, serine 154, and serine 171.

The protein belongs to the eukaryotic ribosomal protein eS8 family. In terms of assembly, component of the small ribosomal subunit (SSU). Mature yeast ribosomes consist of a small (40S) and a large (60S) subunit. The 40S small subunit contains 1 molecule of ribosomal RNA (18S rRNA) and at least 33 different proteins. The large 60S subunit contains 3 rRNA molecules (25S, 5.8S and 5S rRNA) and at least 46 different proteins.

Its subcellular location is the cytoplasm. Its function is as follows. Component of the ribosome, a large ribonucleoprotein complex responsible for the synthesis of proteins in the cell. The small ribosomal subunit (SSU) binds messenger RNAs (mRNAs) and translates the encoded message by selecting cognate aminoacyl-transfer RNA (tRNA) molecules. The large subunit (LSU) contains the ribosomal catalytic site termed the peptidyl transferase center (PTC), which catalyzes the formation of peptide bonds, thereby polymerizing the amino acids delivered by tRNAs into a polypeptide chain. The nascent polypeptides leave the ribosome through a tunnel in the LSU and interact with protein factors that function in enzymatic processing, targeting, and the membrane insertion of nascent chains at the exit of the ribosomal tunnel. This Schizosaccharomyces pombe (strain 972 / ATCC 24843) (Fission yeast) protein is Small ribosomal subunit protein eS8B (rps802).